A 350-amino-acid polypeptide reads, in one-letter code: Biotin synthase (350 aa).

The region spanning 38-257 is the Radical SAM core domain; it reads NKVQVSTLLS…AVARIIMPMS (220 aa). [4Fe-4S] cluster contacts are provided by cysteine 53, cysteine 57, and cysteine 60. [2Fe-2S] cluster is bound by residues cysteine 97, cysteine 128, cysteine 188, and arginine 260.

Belongs to the radical SAM superfamily. Biotin synthase family. In terms of assembly, homodimer. The cofactor is [4Fe-4S] cluster. It depends on [2Fe-2S] cluster as a cofactor.

It catalyses the reaction (4R,5S)-dethiobiotin + (sulfur carrier)-SH + 2 reduced [2Fe-2S]-[ferredoxin] + 2 S-adenosyl-L-methionine = (sulfur carrier)-H + biotin + 2 5'-deoxyadenosine + 2 L-methionine + 2 oxidized [2Fe-2S]-[ferredoxin]. The protein operates within cofactor biosynthesis; biotin biosynthesis; biotin from 7,8-diaminononanoate: step 2/2. In terms of biological role, catalyzes the conversion of dethiobiotin (DTB) to biotin by the insertion of a sulfur atom into dethiobiotin via a radical-based mechanism. This Photobacterium profundum (strain SS9) protein is Biotin synthase.